A 166-amino-acid polypeptide reads, in one-letter code: Thioredoxin, mitochondrial (166 aa).

Residues 1 to 59 constitute a mitochondrion transit peptide; the sequence is MAQRLLLRRFLTSIISGKPSQSRWAPVASRALQTPQYSPGYLTVTPSQARSIYTTRVCS. The Thioredoxin domain occupies 61–166; that stretch reads TFNIQDGPDF…LEAFLKKLIG (106 aa). Catalysis depends on nucleophile residues Cys-90 and Cys-93. Cys-90 and Cys-93 are disulfide-bonded. Lys-152 bears the N6-acetyllysine; alternate mark. Lys-152 carries the post-translational modification N6-succinyllysine; alternate.

This sequence belongs to the thioredoxin family. In terms of assembly, monomer.

The protein localises to the mitochondrion. Important for the control of mitochondrial reactive oxygen species homeostasis, apoptosis regulation and cell viability. Is involved in various redox reactions including the reduction of protein disulfide bonds, through the reversible oxidation of its active center dithiol to a disulfide. The chain is Thioredoxin, mitochondrial (TXN2) from Bos taurus (Bovine).